We begin with the raw amino-acid sequence, 756 residues long: Photosystem I P700 chlorophyll a apoprotein A1 (756 aa).

Transmembrane regions (helical) follow at residues 73-96 (IFSA…FHGA), 159-182 (LYVT…FHYH), 198-222 (MNHH…HVSL), 298-316 (TAHH…GHMY), 353-376 (WHAQ…HHMY), 392-418 (LSLF…IYMV), 440-462 (AIIS…LYIH), and 537-555 (FLVH…LILL). Residues C579 and C588 each coordinate [4Fe-4S] cluster. 2 helical membrane passes run 595–616 (HVFL…HFSW) and 670–692 (LSAY…MFLF). Position 681 (H681) interacts with chlorophyll a'. Chlorophyll a-binding residues include M689 and Y697. W698 lines the phylloquinone pocket. The chain crosses the membrane as a helical span at residues 730-750 (AVGVAHYLLGGIATTWAFFLA).

This sequence belongs to the PsaA/PsaB family. As to quaternary structure, the PsaA/B heterodimer binds the P700 chlorophyll special pair and subsequent electron acceptors. PSI consists of a core antenna complex that captures photons, and an electron transfer chain that converts photonic excitation into a charge separation. The cyanobacterial PSI reaction center is composed of one copy each of PsaA,B,C,D,E,F,I,J,K,L,M and X, and forms trimeric complexes. It depends on PSI electron transfer chain: 5 chlorophyll a, 1 chlorophyll a', 2 phylloquinones and 3 4Fe-4S clusters. PSI core antenna: 90 chlorophyll a, 22 carotenoids, 3 phospholipids and 1 galactolipid. P700 is a chlorophyll a/chlorophyll a' dimer, A0 is one or more chlorophyll a, A1 is one or both phylloquinones and FX is a shared 4Fe-4S iron-sulfur center. as a cofactor.

Its subcellular location is the cellular thylakoid membrane. The catalysed reaction is reduced [plastocyanin] + hnu + oxidized [2Fe-2S]-[ferredoxin] = oxidized [plastocyanin] + reduced [2Fe-2S]-[ferredoxin]. PsaA and PsaB bind P700, the primary electron donor of photosystem I (PSI), as well as the electron acceptors A0, A1 and FX. PSI is a plastocyanin/cytochrome c6-ferredoxin oxidoreductase, converting photonic excitation into a charge separation, which transfers an electron from the donor P700 chlorophyll pair to the spectroscopically characterized acceptors A0, A1, FX, FA and FB in turn. Oxidized P700 is reduced on the lumenal side of the thylakoid membrane by plastocyanin or cytochrome c6. In Cyanothece sp. (strain PCC 7425 / ATCC 29141), this protein is Photosystem I P700 chlorophyll a apoprotein A1.